The sequence spans 251 residues: Vitamin B12 import ATP-binding protein BtuD (251 aa).

The ABC transporter domain occupies 2 to 236 (IRVNSLQVDS…EVLQSVFGTS (235 aa)). 30–37 (GPNGCGKS) is a binding site for ATP.

It belongs to the ABC transporter superfamily. Vitamin B12 importer (TC 3.A.1.13.1) family. In terms of assembly, the complex is composed of two ATP-binding proteins (BtuD), two transmembrane proteins (BtuC) and a solute-binding protein (BtuF).

It localises to the cell inner membrane. The catalysed reaction is an R-cob(III)alamin(out) + ATP + H2O = an R-cob(III)alamin(in) + ADP + phosphate + H(+). In terms of biological role, part of the ABC transporter complex BtuCDF involved in vitamin B12 import. Responsible for energy coupling to the transport system. In Vibrio cholerae serotype O1 (strain ATCC 39315 / El Tor Inaba N16961), this protein is Vitamin B12 import ATP-binding protein BtuD.